Consider the following 421-residue polypeptide: Serine hydroxymethyltransferase (421 aa).

(6S)-5,6,7,8-tetrahydrofolate-binding positions include Leu-121 and 125 to 127 (GHL). Lys-229 bears the N6-(pyridoxal phosphate)lysine mark.

This sequence belongs to the SHMT family. Homodimer. It depends on pyridoxal 5'-phosphate as a cofactor.

Its subcellular location is the cytoplasm. The enzyme catalyses (6R)-5,10-methylene-5,6,7,8-tetrahydrofolate + glycine + H2O = (6S)-5,6,7,8-tetrahydrofolate + L-serine. Its pathway is one-carbon metabolism; tetrahydrofolate interconversion. It functions in the pathway amino-acid biosynthesis; glycine biosynthesis; glycine from L-serine: step 1/1. Catalyzes the reversible interconversion of serine and glycine with tetrahydrofolate (THF) serving as the one-carbon carrier. This reaction serves as the major source of one-carbon groups required for the biosynthesis of purines, thymidylate, methionine, and other important biomolecules. Also exhibits THF-independent aldolase activity toward beta-hydroxyamino acids, producing glycine and aldehydes, via a retro-aldol mechanism. The protein is Serine hydroxymethyltransferase of Actinobacillus pleuropneumoniae serotype 5b (strain L20).